An 874-amino-acid chain; its full sequence is Probable inorganic carbon transporter subunit DabA (874 aa).

Zn(2+) is bound by residues Cys-398, Asp-400, His-580, and Cys-595.

The protein belongs to the inorganic carbon transporter (TC 9.A.2) DabA family. Forms a complex with DabB. Zn(2+) is required as a cofactor.

The protein localises to the cell membrane. Part of an energy-coupled inorganic carbon pump. In Bacillus cereus (strain ATCC 10987 / NRS 248), this protein is Probable inorganic carbon transporter subunit DabA.